A 342-amino-acid polypeptide reads, in one-letter code: Cell cycle control protein 50C (342 aa).

The Cytoplasmic portion of the chain corresponds to 1-33 (MEMMPQYDLSRLPENTALKQQTLPTQQLNLSAS). A helical membrane pass occupies residues 34–54 (VVLSIFFITGGFCLSIGIILL). Over 55-306 (LSAKSTKKIE…STLTWIGGGG (252 aa)) the chain is Extracellular. N-linked (GlcNAc...) asparagine glycosylation is found at N66, N80, N89, and N205. A helical membrane pass occupies residues 307–327 (LFLGLTYTVTGALTLLASFAI). At 328 to 342 (LTIHLMLKRSKLNFL) the chain is on the cytoplasmic side.

It belongs to the CDC50/LEM3 family. In terms of tissue distribution, specifically expressed in testis.

It is found in the membrane. This Mus musculus (Mouse) protein is Cell cycle control protein 50C (Tmem30c).